Reading from the N-terminus, the 654-residue chain is tRNA 5-methylaminomethyl-2-thiouridine biosynthesis bifunctional protein MnmC (654 aa).

The interval 1 to 235 (MSDFQHAQLD…KREMLGGTYQ (235 aa)) is tRNA (mnm(5)s(2)U34)-methyltransferase. An FAD-dependent cmnm(5)s(2)U34 oxidoreductase region spans residues 261–654 (VGGGLAGCAS…LRDLVRGQRG (394 aa)).

The protein in the N-terminal section; belongs to the methyltransferase superfamily. tRNA (mnm(5)s(2)U34)-methyltransferase family. It in the C-terminal section; belongs to the DAO family. FAD serves as cofactor.

The protein localises to the cytoplasm. It carries out the reaction 5-aminomethyl-2-thiouridine(34) in tRNA + S-adenosyl-L-methionine = 5-methylaminomethyl-2-thiouridine(34) in tRNA + S-adenosyl-L-homocysteine + H(+). Catalyzes the last two steps in the biosynthesis of 5-methylaminomethyl-2-thiouridine (mnm(5)s(2)U) at the wobble position (U34) in tRNA. Catalyzes the FAD-dependent demodification of cmnm(5)s(2)U34 to nm(5)s(2)U34, followed by the transfer of a methyl group from S-adenosyl-L-methionine to nm(5)s(2)U34, to form mnm(5)s(2)U34. The polypeptide is tRNA 5-methylaminomethyl-2-thiouridine biosynthesis bifunctional protein MnmC (Pseudomonas aeruginosa (strain UCBPP-PA14)).